The primary structure comprises 364 residues: Anthranilate N-methyltransferase (364 aa).

The interval M1 to D20 is disordered. 4 residues coordinate S-adenosyl-L-methionine: G209, D232, M253, and K266. H270 functions as the Proton acceptor in the catalytic mechanism.

Belongs to the class I-like SAM-binding methyltransferase superfamily. Cation-independent O-methyltransferase family. COMT subfamily. In terms of assembly, homodimer. As to expression, expressed in leaves, flowers, stems and roots. Detected in the vascular tissues in stems, in the rhizodermis or the endodermis of roots, in the inside of carpels, in the central vascular bundles of the syncarp ovary and in the secretory oil glands located around the outer ovary wall.

The catalysed reaction is anthranilate + S-adenosyl-L-methionine = N-methylanthranilate + S-adenosyl-L-homocysteine + H(+). Its activity is regulated as follows. Inhibited by Ca(2+), Co(2+), Fe(2+), Fe(3+), Cu(2+) or Zn(2+). No effect of Mg(2+). Involved in the biosynthesis of acridine alkaloids. N-methyltransferase with a strict substrate specificity for anthranilate. No activity with anthranilic acid methyl ester, anthraniloyl CoA, 3- or 4-amino-benzoic acid, salicylic acid, catechol, eugenol, caffeic acid, quercetin, theobromin, theophyllin, putrescine and nicotinic acid among others. This Ruta graveolens (Common rue) protein is Anthranilate N-methyltransferase.